We begin with the raw amino-acid sequence, 516 residues long: uncharacterized protein (516 aa).

The segment at 1-35 is disordered; it reads MAERTSESSSESASFDLEKQQSNHHDRYQSSVSSE. The segment covering 16-28 has biased composition (basic and acidic residues); it reads DLEKQQSNHHDRY. S31 is subject to Phosphoserine. 12 helical membrane-spanning segments follow: residues 77 to 97, 111 to 131, 143 to 163, 166 to 186, 198 to 218, 231 to 251, 301 to 321, 345 to 365, 386 to 406, 412 to 432, 439 to 461, and 481 to 501; these read VAVM…FSGA, VALL…VVWA, MIIA…AKDI, VMIC…TVAG, GLVI…SPIV, WTSY…IIFH, LLIF…VYGI, SLPY…VALF, LPSM…LAWT, IHWI…ITIF, IIDC…RSSF, and AGSL…MLFL.

Belongs to the major facilitator superfamily.

It is found in the membrane. This is an uncharacterized protein from Schizosaccharomyces pombe (strain 972 / ATCC 24843) (Fission yeast).